The following is a 5147-amino-acid chain: Cadherin-related tumor suppressor (5147 aa).

Positions 1–35 are cleaved as a signal peptide; sequence MERLLLLFFLLLAGRESLCQTGDTKLELLAPRGRS. Cadherin domains are found at residues 36–156, 157–270, 271–382, 383–494, 495–599, 600–708, 709–820, 821–942, 943–1049, 1050–1153, 1154–1278, 1279–1384, 1385–1489, 1490–1601, 1602–1713, 1714–1823, 1824–1922, 1923–2027, 2028–2167, 2168–2278, 2279–2385, 2386–2491, 2492–2596, 2597–2703, 2704–2810, 2811–2913, 2914–3013, 3014–3124, 3125–3229, 3230–3334, 3335–3439, 3440–3545, 3546–3651, and 3652–3756; these read YATT…SPEF, PEPS…PPIF, DHSD…DPII, SFRF…EPVF, EKSE…APQF, SQRE…DPQF, YPRH…LEML, ECGQ…APVF, ALDR…TPVF, DHTS…APQF, TNST…APEF, LRAP…APEF, TQSS…PPIF, PSTA…APVF, VSMN…VPQF, EQRS…PPQF, LDTP…PPLF, EDTV…APIF, DPMS…VPVF, ISAN…SPVF, DPKQ…PTFL, DSPY…DPVF, ELQS…IPKF, DSTT…FPTF, AYMA…APVM, EQLI…PPKF, TRLF…APEF, EHSF…PPKF, EQAE…TPRF, SVNS…PPVF, NHKE…YPQF, LQPV…PPEF, IKHY…GPTF, and TPEG…NPST. At 36–4583 the chain is on the extracellular side; it reads YATTYEQYAA…GQDAAQVADP (4548 aa). Residues N239, N257, N276, N280, N402, and N461 are each glycosylated (N-linked (GlcNAc...) asparagine). Residues N605 and N631 are each glycosylated (N-linked (GlcNAc...) asparagine). N-linked (GlcNAc...) asparagine glycans are attached at residues N1155, N1367, and N1458. Residues N1751, N1831, and N1880 are each glycosylated (N-linked (GlcNAc...) asparagine). 6 N-linked (GlcNAc...) asparagine glycosylation sites follow: N2080, N2171, N2247, N2290, N2437, and N2581. N-linked (GlcNAc...) asparagine glycosylation occurs at N2799. 3 N-linked (GlcNAc...) asparagine glycosylation sites follow: N2920, N2946, and N2967. N-linked (GlcNAc...) asparagine glycosylation is found at N3167, N3303, N3386, N3389, and N3525. N-linked (GlcNAc...) asparagine glycans are attached at residues N3852, N3865, and N3905. 4 EGF-like domains span residues 3950-4011, 4013-4049, 4052-4090, and 4092-4128; these read GYEP…EQCS, RQDPCLPNPCHSQVQCRRLGSDFQCMCPANRDGKHCE, RSDVCYSKPCRNGGSCQRSPDGSSYFCLCRPGFRGNQCE, and VSDSCRPNPCLHGGLCVSLKPGYKCNCTPGRYGRHCE. 16 disulfide bridges follow: C3954–C3966, C3960–C3999, C4001–C4010, C4017–C4028, C4022–C4037, C4039–C4048, C4056–C4067, C4061–C4078, C4080–C4089, C4096–C4107, C4101–C4116, C4118–C4127, C4294–C4320, C4325–C4341, C4334–C4350, and C4352–C4361. The region spanning 4129 to 4320 is the Laminin G-like 1 domain; that stretch reads RFSYGFQPLS…LQQKGILAGC (192 aa). N-linked (GlcNAc...) asparagine glycosylation is present at N4306. The EGF-like 5 domain occupies 4321–4362; sequence NRQACQPALAAERCGGFAGQCIDRWSSSLCQCGGHLQSPDCS. A Laminin G-like 2 domain is found at 4402–4569; it reads DNQQMRERRA…RYHGKIESGC (168 aa). 5 N-linked (GlcNAc...) asparagine glycosylation sites follow: N4414, N4471, N4487, N4539, and N4550. The cysteines at positions 4536 and 4569 are disulfide-linked. A helical transmembrane segment spans residues 4584 to 4609; the sequence is LSIGFTLVIVFFVILVVAILGSYVIY. Over 4610 to 5147 the chain is Cytoplasmic; that stretch reads RFRGKQEKIG…NGPAAPEEYV (538 aa). The essential for stability of mitochondrial electron chain complexes I and V, and promotes interaction with ND-24 stretch occupies residues 4744-4771; the sequence is PEHYDLENASSIAPSDIDIVYHYKGYRE. 3 disordered regions span residues 4787–4850, 4871–4921, and 4967–5041; these read AYTH…SQQP, TSSS…QTSM, and GDVD…PIPP. The segment covering 4826-4835 has biased composition (polar residues); that stretch reads SASRTHQSTP. Composition is skewed to low complexity over residues 4838 to 4850 and 4891 to 4918; these read RLSPSSELSSQQP and SPVMSQLSGQSSSASRQKPGVPQQQAQQ. Position 4843 is a phosphoserine (S4843). Residues 4972–5008 show a composition bias toward polar residues; sequence HSSTSTDESGNDSFTCSEIEYDNNSLSGDGKYSTSKS. Residues S5054 and S5061 each carry the phosphoserine modification. The interval 5113-5147 is disordered; the sequence is PDTNGPSQQQQQQTQVVSTLRMPSSNGPAAPEEYV. The span at 5119–5131 shows a compositional bias: low complexity; that stretch reads SQQQQQQTQVVST.

In terms of assembly, interacts with Fbxl7. Ft-mito interacts with NADH dehydrogenase subunit ND-24 and with ATP synthase subunit ATPsynC. Post-translationally, phosphorylated by fj on Ser/Thr of cadherin domains. Phosphorylation by fj enhances binding to ds. Phosphorylated in the cytoplasmic domain in a dco-dependent manner which is promoted by ds. In terms of processing, proteolytically cleaved to yield stably associated N- and C-terminal fragments. The C-terminal fragment is processed further to release a 68 kDa mitochondrial fragment, Ft-mito.

Its subcellular location is the cell membrane. The protein localises to the apical cell membrane. It localises to the mitochondrion. Its function is as follows. Involved in regulation of planar cell polarity in the compound eye where it is required for correct specification of the R3 and R4 photoreceptor cells by regulating Fz activity in the R3/R4 precursor cells. This is likely to occur through creation of an ft gradient so that the equatorial R3/R4 precursor cell has a higher level of ft function than its polar neighbor. Also required for planar cell polarity of wing hairs. Mediates heterophilic cell adhesion in vitro and is required to stabilize ds on the cell surface. Involved in regulation of eye imaginal disk size. Upstream component of the Hippo pathway where it is likely to act as a cell surface receptor involved in regulation of tissue size and is required for the localization and stability of ex. Probably acts as a cell surface receptor for ds. Functionally, regulates mitochondrial electron transport chain integrity and promotes oxidative phosphorylation. This Drosophila melanogaster (Fruit fly) protein is Cadherin-related tumor suppressor.